The primary structure comprises 736 residues: Poly(A) polymerase gamma (736 aa).

Lys-2 is subject to N6-acetyllysine. Phosphoserine occurs at positions 23 and 29. Residues 99-101 (FGS), Thr-108, 112-114 (DID), Asp-166, Lys-227, Tyr-236, and 245-246 (GV) each bind ATP. Residues Asp-112, Asp-114, and Asp-166 each contribute to the Mg(2+) site. The segment at 506–564 (KQSLSDVNRSSGGLQSKRLSLDSSCLDSSRDTDNGTPFNSPASKSDSPSVGETERNSAE) is disordered. Positions 509-519 (LSDVNRSSGGL) are enriched in polar residues. Low complexity predominate over residues 521-532 (SKRLSLDSSCLD). Phosphoserine is present on Ser-525. The segment covering 539–555 (NGTPFNSPASKSDSPSV) has biased composition (polar residues). Ser-599 and Ser-648 each carry phosphoserine. Phosphothreonine is present on Thr-654. Basic and acidic residues predominate over residues 673 to 685 (DPRTAEERKRKSV). A disordered region spans residues 673-720 (DPRTAEERKRKSVDAIGGESMPIPTIDTSRKKRLPSKELPDSSSPVPA). Ser-684 and Ser-708 each carry phosphoserine.

It belongs to the poly(A) polymerase family. The cofactor is Mg(2+). Mn(2+) serves as cofactor. Expressed predominantly in testis, and weakly in other tissues. Overexpressed in several tumors.

The protein localises to the nucleus. The catalysed reaction is RNA(n) + ATP = RNA(n)-3'-adenine ribonucleotide + diphosphate. Functionally, responsible for the post-transcriptional adenylation of the 3'-terminal of mRNA precursors and several small RNAs including signal recognition particle (SRP) RNA, nuclear 7SK RNA, U2 small nuclear RNA, and ribosomal 5S RNA. The protein is Poly(A) polymerase gamma of Homo sapiens (Human).